A 218-amino-acid chain; its full sequence is Protein-L-isoaspartate O-methyltransferase (218 aa).

The active site involves serine 66.

This sequence belongs to the methyltransferase superfamily. L-isoaspartyl/D-aspartyl protein methyltransferase family.

The protein resides in the cytoplasm. It catalyses the reaction [protein]-L-isoaspartate + S-adenosyl-L-methionine = [protein]-L-isoaspartate alpha-methyl ester + S-adenosyl-L-homocysteine. In terms of biological role, catalyzes the methyl esterification of L-isoaspartyl residues in peptides and proteins that result from spontaneous decomposition of normal L-aspartyl and L-asparaginyl residues. It plays a role in the repair and/or degradation of damaged proteins. In Caulobacter sp. (strain K31), this protein is Protein-L-isoaspartate O-methyltransferase.